A 681-amino-acid polypeptide reads, in one-letter code: Serine/threonine-protein kinase PAK 6 (681 aa).

Disordered regions lie at residues 1 to 30, 149 to 169, 200 to 256, and 268 to 355; these read MFRK…DPKE, GGTP…PRVL, QSSP…ESSL, and TAAT…PRTW. A CRIB domain is found at 12 to 25; it reads ISAPQNFQHRVHTS. The interval 26–406 is linker; that stretch reads FDPKEGKFVG…VVDQGDPRLL (381 aa). Low complexity-rich tracts occupy residues 201–212 and 268–278; these read SSPPGASPPTGT and TAATAPPSSSK. The segment covering 308 to 333 has biased composition (polar residues); that stretch reads SLPSDQPVGTFSPLTTSDTSSPQKSL. Residues 407–658 form the Protein kinase domain; it reads LDSYVKIGEG…AQELLDHPFL (252 aa). ATP is bound by residues 413–421 and Lys-436; that span reads IGEGSTGIV. Residue Asp-526 is the Proton acceptor of the active site. Ser-560 is subject to Phosphoserine; by autocatalysis.

This sequence belongs to the protein kinase superfamily. STE Ser/Thr protein kinase family. STE20 subfamily. As to quaternary structure, interacts tightly with GTP-bound but not GDP-bound CDC42/p21 and RAC1. Interacts with the androgen receptor AR and the estrogen receptor ESR1. Interacts with IQGAP1 and PPM1B. In terms of processing, autophosphorylated. Phosphorylated by MAP2K6//MAPKK6, leading to PAK6 activation. Selectively expressed in brain and testis, with lower levels in multiple tissues including prostate and breast.

The protein localises to the cytoplasm. The protein resides in the nucleus. The enzyme catalyses L-seryl-[protein] + ATP = O-phospho-L-seryl-[protein] + ADP + H(+). The catalysed reaction is L-threonyl-[protein] + ATP = O-phospho-L-threonyl-[protein] + ADP + H(+). In terms of biological role, serine/threonine protein kinase that plays a role in the regulation of gene transcription. The kinase activity is induced by various effectors including AR or MAP2K6/MAPKK6. Phosphorylates the DNA-binding domain of androgen receptor/AR and thereby inhibits AR-mediated transcription. Also inhibits ESR1-mediated transcription. May play a role in cytoskeleton regulation by interacting with IQGAP1. May protect cells from apoptosis through phosphorylation of BAD. The chain is Serine/threonine-protein kinase PAK 6 (PAK6) from Homo sapiens (Human).